A 1393-amino-acid chain; its full sequence is Polarized growth protein RAX2 (1393 aa).

Residues 1–21 (MLVQFQQLLLLLISIIKLCQA) form the signal peptide. Over 22–1329 (DDNDNSFFQP…TNKNLSRGKV (1308 aa)) the chain is Extracellular. N-linked (GlcNAc...) asparagine glycans are attached at residues Asn-62, Asn-85, Asn-105, Asn-125, Asn-133, Asn-139, Asn-164, Asn-186, Asn-195, Asn-212, Asn-256, Asn-260, Asn-266, Asn-269, Asn-362, Asn-398, Asn-405, Asn-479, Asn-536, Asn-542, Asn-565, Asn-599, Asn-646, Asn-649, Asn-653, Asn-674, Asn-689, Asn-696, Asn-702, Asn-714, Asn-747, Asn-764, Asn-768, Asn-792, Asn-829, Asn-863, Asn-899, Asn-935, Asn-946, Asn-958, Asn-985, Asn-1020, Asn-1030, Asn-1041, Asn-1213, Asn-1232, Asn-1262, and Asn-1323. Residues 1330–1350 (VGISLACALGSTTLLGLLYII) traverse the membrane as a helical segment. The Cytoplasmic portion of the chain corresponds to 1351–1393 (PYFALFKNRKDGYFQPERIHEDEMMDAVNPEDLLHEIDLQREK).

The protein belongs to the RAX2 family.

The protein resides in the cell membrane. Its subcellular location is the cell tip. Required for establishing sites of emergence of yeast and hyphal daughters and for maintaining the linearity of hyphal growth, but not involved in responses that require a reorientation of the direction of already established hyphal growth (tropisms). Does not play a role in penetration or injury of human epithelial cells. The chain is Polarized growth protein RAX2 from Candida albicans (strain SC5314 / ATCC MYA-2876) (Yeast).